Here is a 252-residue protein sequence, read N- to C-terminus: Hydroxyacylglutathione hydrolase (252 aa).

Zn(2+)-binding residues include H54, H56, D58, H59, H111, D130, and H170.

This sequence belongs to the metallo-beta-lactamase superfamily. Glyoxalase II family. Monomer. Requires Zn(2+) as cofactor.

It catalyses the reaction an S-(2-hydroxyacyl)glutathione + H2O = a 2-hydroxy carboxylate + glutathione + H(+). The protein operates within secondary metabolite metabolism; methylglyoxal degradation; (R)-lactate from methylglyoxal: step 2/2. Thiolesterase that catalyzes the hydrolysis of S-D-lactoyl-glutathione to form glutathione and D-lactic acid. This is Hydroxyacylglutathione hydrolase from Francisella tularensis subsp. holarctica (strain FTNF002-00 / FTA).